Reading from the N-terminus, the 131-residue chain is Ribonuclease P protein component (131 aa).

It belongs to the RnpA family. As to quaternary structure, consists of a catalytic RNA component (M1 or rnpB) and a protein subunit.

The catalysed reaction is Endonucleolytic cleavage of RNA, removing 5'-extranucleotides from tRNA precursor.. Its function is as follows. RNaseP catalyzes the removal of the 5'-leader sequence from pre-tRNA to produce the mature 5'-terminus. It can also cleave other RNA substrates such as 4.5S RNA. The protein component plays an auxiliary but essential role in vivo by binding to the 5'-leader sequence and broadening the substrate specificity of the ribozyme. This is Ribonuclease P protein component from Cyanothece sp. (strain PCC 7425 / ATCC 29141).